Here is a 116-residue protein sequence, read N- to C-terminus: Putative pterin-4-alpha-carbinolamine dehydratase (116 aa).

Belongs to the pterin-4-alpha-carbinolamine dehydratase family.

The catalysed reaction is (4aS,6R)-4a-hydroxy-L-erythro-5,6,7,8-tetrahydrobiopterin = (6R)-L-erythro-6,7-dihydrobiopterin + H2O. This is Putative pterin-4-alpha-carbinolamine dehydratase from Xylella fastidiosa (strain 9a5c).